The following is a 97-amino-acid chain: Phosphoribosyl-ATP pyrophosphatase (97 aa).

It belongs to the PRA-PH family.

Its subcellular location is the cytoplasm. The catalysed reaction is 1-(5-phospho-beta-D-ribosyl)-ATP + H2O = 1-(5-phospho-beta-D-ribosyl)-5'-AMP + diphosphate + H(+). Its pathway is amino-acid biosynthesis; L-histidine biosynthesis; L-histidine from 5-phospho-alpha-D-ribose 1-diphosphate: step 2/9. The sequence is that of Phosphoribosyl-ATP pyrophosphatase from Methanoculleus marisnigri (strain ATCC 35101 / DSM 1498 / JR1).